The chain runs to 263 residues: uncharacterized protein (263 aa).

The signal sequence occupies residues 1–22 (MEYLKRLALFISVIILTIFIMG). Cysteine 23 carries the N-palmitoyl cysteine lipid modification. Cysteine 23 carries the S-diacylglycerol cysteine lipid modification.

It belongs to the staphylococcal tandem lipoprotein family.

It localises to the cell membrane. This is an uncharacterized protein from Staphylococcus aureus (strain MSSA476).